A 287-amino-acid polypeptide reads, in one-letter code: tRNA selenocysteine 1-associated protein 1 (287 aa).

RRM domains follow at residues 3 to 86 (ASLW…YATY) and 96 to 175 (YSLF…VAIP).

This sequence belongs to the RRM TRSPAP family. In terms of assembly, component of the tRNA(Sec) complex composed at least of EEFSEC, SECISBP2, SEPHS1, SEPSECS, TRNAU1AP and tRNA(Sec). Found in a complex with tRNA(Sec). Interacts with SEPSECS. Associates with mRNP and/or polysomes. Found in a complex with EEFSEC, SECISBP2, TRNAU1AP and tRNA(Sec).

It is found in the nucleus. The protein resides in the cytoplasm. In terms of biological role, involved in the early steps of selenocysteine biosynthesis and tRNA(Sec) charging to the later steps resulting in the cotranslational incorporation of selenocysteine into selenoproteins. Stabilizes the SECISBP2, EEFSEC and tRNA(Sec) complex. May be involved in the methylation of tRNA(Sec). Enhances efficiency of selenoproteins synthesis. This is tRNA selenocysteine 1-associated protein 1 (TRNAU1AP) from Homo sapiens (Human).